Here is a 317-residue protein sequence, read N- to C-terminus: Putative ribose-phosphate pyrophosphokinase (317 aa).

Residues 211 to 224 are binding of phosphoribosylpyrophosphate; sequence GRDVIVLDDEIAKG.

Belongs to the ribose-phosphate pyrophosphokinase family.

It catalyses the reaction D-ribose 5-phosphate + ATP = 5-phospho-alpha-D-ribose 1-diphosphate + AMP + H(+). The chain is Putative ribose-phosphate pyrophosphokinase from Streptomyces coelicolor (strain ATCC BAA-471 / A3(2) / M145).